A 411-amino-acid polypeptide reads, in one-letter code: Short chain dehydrogenase ausT (411 aa).

4 residues coordinate NADP(+): Asp-105, Gln-137, Tyr-249, and Arg-253. Tyr-249 (proton donor) is an active-site residue. The Proton donor role is filled by Tyr-263.

It belongs to the short-chain dehydrogenases/reductases (SDR) family.

The protein operates within secondary metabolite biosynthesis; terpenoid biosynthesis. In terms of biological role, short chain dehydrogenase; part of the gene cluster that mediates the biosynthesis of calidodehydroaustin, a fungal meroterpenoid. The first step of the pathway is the synthesis of 3,5-dimethylorsellinic acid by the polyketide synthase ausA. 3,5-dimethylorsellinic acid is then prenylated by the polyprenyl transferase ausN. Further epoxidation by the FAD-dependent monooxygenase ausM and cyclization by the probable terpene cyclase ausL lead to the formation of protoaustinoid A. Protoaustinoid A is then oxidized to spiro-lactone preaustinoid A3 by the combined action of the FAD-binding monooxygenases ausB and ausC, and the dioxygenase ausE. Acid-catalyzed keto-rearrangement and ring contraction of the tetraketide portion of preaustinoid A3 by ausJ lead to the formation of preaustinoid A4. The aldo-keto reductase ausK, with the help of ausH, is involved in the next step by transforming preaustinoid A4 into isoaustinone which is in turn hydroxylated by the P450 monooxygenase ausI to form austinolide. The cytochrome P450 monooxygenase ausG modifies austinolide to austinol. Austinol is further acetylated to austin by the O-acetyltransferase ausP, which spontaneously changes to dehydroaustin. The cytochrome P450 monooxygenase ausR then converts dehydroaustin is into 7-dehydrodehydroaustin. The hydroxylation catalyzed by ausR permits the O-acetyltransferase ausQ to add an additional acetyl group to the molecule, leading to the formation of acetoxydehydroaustin. The short chain dehydrogenase ausT catalyzes the reduction of the double bond present between carbon atoms 1 and 2 to convert 7-dehydrodehydroaustin into 1,2-dihydro-7-hydroxydehydroaustin. AusQ catalyzes not only an acetylation reaction but also the addition of the PKS ausV diketide product to 1,2-dihydro-7-hydroxydehydroaustin, forming precalidodehydroaustin. Finally, the iron/alpha-ketoglutarate-dependent dioxygenase converts precalidodehydroaustin into calidodehydroaustin. This Aspergillus calidoustus protein is Short chain dehydrogenase ausT.